The following is a 434-amino-acid chain: Glutamate-1-semialdehyde 2,1-aminomutase 1 (434 aa).

At K270 the chain carries N6-(pyridoxal phosphate)lysine.

This sequence belongs to the class-III pyridoxal-phosphate-dependent aminotransferase family. HemL subfamily. In terms of assembly, homodimer. Pyridoxal 5'-phosphate is required as a cofactor.

It is found in the cytoplasm. The catalysed reaction is (S)-4-amino-5-oxopentanoate = 5-aminolevulinate. It participates in porphyrin-containing compound metabolism; protoporphyrin-IX biosynthesis; 5-aminolevulinate from L-glutamyl-tRNA(Glu): step 2/2. The protein is Glutamate-1-semialdehyde 2,1-aminomutase 1 of Bacillus anthracis (strain A0248).